We begin with the raw amino-acid sequence, 99 residues long: DNA-binding protein HU (99 aa).

A disordered region spans residues 67–86 (REGRNPKTGAKMKIDAYNQP).

This sequence belongs to the bacterial histone-like protein family. In terms of assembly, homodimer.

In terms of biological role, histone-like DNA-binding protein which is capable of wrapping DNA to stabilize it, and thus to prevent its denaturation under extreme environmental conditions. The chain is DNA-binding protein HU (hup) from Rickettsia conorii (strain ATCC VR-613 / Malish 7).